Reading from the N-terminus, the 610-residue chain is Peptidyl-prolyl cis-trans isomerase 9 (610 aa).

Ser13 is subject to Phosphoserine. WD repeat units follow at residues 45–83 (MHNAEIYKCFPTKSNYILSVSYDGYVKFWHKTPNGVEYI), 88–127 (AHNAMLLSAELSQDERLFITGADDKSLKVFDVESIDLVNI), and 177–216 (KHTAPVHCLRYLSTLDCFLSIDIGGMVEYWSPEEPFQKPD). The PPIase cyclophilin-type domain occupies 453 to 607 (LGKAAIIHTT…EPTKIINISI (155 aa)).

This sequence belongs to the cyclophilin-type PPIase family.

The protein resides in the nucleus. It carries out the reaction [protein]-peptidylproline (omega=180) = [protein]-peptidylproline (omega=0). Its function is as follows. PPIases accelerate the folding of proteins. It catalyzes the cis-trans isomerization of proline imidic peptide bonds in oligopeptides. This is Peptidyl-prolyl cis-trans isomerase 9 (cyp9) from Schizosaccharomyces pombe (strain 972 / ATCC 24843) (Fission yeast).